The primary structure comprises 287 residues: Pyridoxal 5'-phosphate synthase subunit PdxS (287 aa).

A D-ribose 5-phosphate-binding site is contributed by aspartate 21. Catalysis depends on lysine 78, which acts as the Schiff-base intermediate with D-ribose 5-phosphate. Glycine 150 is a binding site for D-ribose 5-phosphate. Position 162 (arginine 162) interacts with D-glyceraldehyde 3-phosphate. Residues glycine 211 and 232-233 (GS) each bind D-ribose 5-phosphate.

The protein belongs to the PdxS/SNZ family. As to quaternary structure, in the presence of PdxT, forms a dodecamer of heterodimers.

It catalyses the reaction aldehydo-D-ribose 5-phosphate + D-glyceraldehyde 3-phosphate + L-glutamine = pyridoxal 5'-phosphate + L-glutamate + phosphate + 3 H2O + H(+). It functions in the pathway cofactor biosynthesis; pyridoxal 5'-phosphate biosynthesis. Catalyzes the formation of pyridoxal 5'-phosphate from ribose 5-phosphate (RBP), glyceraldehyde 3-phosphate (G3P) and ammonia. The ammonia is provided by the PdxT subunit. Can also use ribulose 5-phosphate and dihydroxyacetone phosphate as substrates, resulting from enzyme-catalyzed isomerization of RBP and G3P, respectively. This chain is Pyridoxal 5'-phosphate synthase subunit PdxS, found in Francisella tularensis subsp. tularensis (strain FSC 198).